The sequence spans 100 residues: Aspartyl/glutamyl-tRNA(Asn/Gln) amidotransferase subunit C (100 aa).

Belongs to the GatC family. As to quaternary structure, heterotrimer of A, B and C subunits.

It catalyses the reaction L-glutamyl-tRNA(Gln) + L-glutamine + ATP + H2O = L-glutaminyl-tRNA(Gln) + L-glutamate + ADP + phosphate + H(+). The catalysed reaction is L-aspartyl-tRNA(Asn) + L-glutamine + ATP + H2O = L-asparaginyl-tRNA(Asn) + L-glutamate + ADP + phosphate + 2 H(+). In terms of biological role, allows the formation of correctly charged Asn-tRNA(Asn) or Gln-tRNA(Gln) through the transamidation of misacylated Asp-tRNA(Asn) or Glu-tRNA(Gln) in organisms which lack either or both of asparaginyl-tRNA or glutaminyl-tRNA synthetases. The reaction takes place in the presence of glutamine and ATP through an activated phospho-Asp-tRNA(Asn) or phospho-Glu-tRNA(Gln). The sequence is that of Aspartyl/glutamyl-tRNA(Asn/Gln) amidotransferase subunit C from Streptococcus suis (strain 98HAH33).